The sequence spans 134 residues: Small ribosomal subunit protein uS8c (134 aa).

The protein belongs to the universal ribosomal protein uS8 family. Part of the 30S ribosomal subunit.

It localises to the plastid. In terms of biological role, one of the primary rRNA binding proteins, it binds directly to 16S rRNA central domain where it helps coordinate assembly of the platform of the 30S subunit. This is Small ribosomal subunit protein uS8c (rps8) from Cuscuta reflexa (Southern Asian dodder).